The following is a 69-amino-acid chain: Cap-specific mRNA (nucleoside-2'-O-)-methyltransferase (69 aa).

Tyr22 contributes to the mRNA binding site. The S-adenosyl-L-methionine site is built by Gln39, Tyr66, and Gly68.

It belongs to the class I-like SAM-binding methyltransferase superfamily. Poxvirus/kinetoplastid 2'-O-MTase family. As to quaternary structure, interacts with poly(A) polymerase catalytic subunit OPG063. Interacts with OPG109 and OPG123; these interactions might help linking transcription to capping and polyadenylation.

Its subcellular location is the virion. It carries out the reaction a 5'-end (N(7)-methyl 5'-triphosphoguanosine)-ribonucleoside in mRNA + S-adenosyl-L-methionine = a 5'-end (N(7)-methyl 5'-triphosphoguanosine)-(2'-O-methyl-ribonucleoside) in mRNA + S-adenosyl-L-homocysteine + H(+). Functionally, displays methyltransferase, positive regulation of the poly(A) polymerase and transcription elongation activities. Involved in the modification of both mRNA ends and in intermediate and late gene positive transcription elongation. At the mRNAs 5' end, methylates the ribose 2' OH group of the first transcribed nucleotide, thereby producing a 2'-O-methylpurine cap. At the 3' end, functions as a processivity factor which stimulates the activity of the viral poly(A) polymerase OPG063 that creates mRNA's poly(A) tail. In the presence of OPG102, OPG063 does not dissociate from the RNA allowing tail elongation to around 250 adenylates. This is Cap-specific mRNA (nucleoside-2'-O-)-methyltransferase (OPG102) from Sus scrofa (Pig).